A 329-amino-acid polypeptide reads, in one-letter code: Ubiquitin carboxyl-terminal hydrolase isozyme L5 (329 aa).

In terms of domain architecture, UCH catalytic spans 7-225 (EWCLMESDPG…IRFNLMAIVS (219 aa)). Lys-47 is modified (N6-succinyllysine). Cys-88 acts as the Nucleophile in catalysis. Residue Lys-158 is modified to N6-acetyllysine. Catalysis depends on His-164, which acts as the Proton donor. Lys-289 is subject to N6-succinyllysine. In terms of domain architecture, ULD spans 291–319 (NYLPFIMELLKTLAEHQQLIPLVEKAKEK). The segment at 313-329 (VEKAKEKQNAKKAQETK) is interaction with ADRM1.

This sequence belongs to the peptidase C12 family. In terms of assembly, component of the 19S (PA700) regulatory complex of the 26S proteasome. Interacts with ADRM1 and NFRKB; in vitro ADRM1 and NFRKB compete for interaction with UCHL5. Component of the INO80 complex; specifically part of a complex module associated with N-terminus of INO80.

It is found in the cytoplasm. It localises to the nucleus. It carries out the reaction Thiol-dependent hydrolysis of ester, thioester, amide, peptide and isopeptide bonds formed by the C-terminal Gly of ubiquitin (a 76-residue protein attached to proteins as an intracellular targeting signal).. With respect to regulation, activated by ADRM1. Inhibited by interaction with NFRKB. Functionally, protease that specifically cleaves 'Lys-48'-linked polyubiquitin chains. Deubiquitinating enzyme associated with the 19S regulatory subunit of the 26S proteasome. Putative regulatory component of the INO80 complex; however is inactive in the INO80 complex and is activated by a transient interaction of the INO80 complex with the proteasome via ADRM1. The polypeptide is Ubiquitin carboxyl-terminal hydrolase isozyme L5 (UCHL5) (Homo sapiens (Human)).